The following is a 376-amino-acid chain: Peroxisomal targeting signal 2 receptor (376 aa).

WD repeat units follow at residues 58-98 (DTQD…YPVM), 102-142 (EHQR…NTSL), 182-222 (DNND…PLFM), 226-267 (AHNG…PNVH), 279-319 (GHEF…TSRV), and 339-376 (AHTE…QRLQ).

The protein belongs to the WD repeat peroxin-7 family. In terms of assembly, interacts with PEX20. In terms of processing, polyubiquitinated, leading to its degradation by the proteasome. Ubiquitination is dependent of PEX5 and PEX20 and takes place following recycling into the cytosol.

It is found in the cytoplasm. It localises to the cytosol. Its subcellular location is the peroxisome matrix. Functionally, receptor required for the peroxisomal import of proteins containing a C-terminal PTS2-type peroxisomal targeting signal, such as 3-oxoacyl-CoA thiolase. Specifically binds to cargo proteins containing a PTS2 peroxisomal targeting signal in the cytosol. Cargo protein-binding triggers interaction with PEX20 and formation of a ternary complex composed of PEX20 and PEX7 along with PTS2-containing cargo proteins, which is tranlocated into peroxisomes by passing through the peroxisomal docking complex. PEX7 receptor is then retrotranslocated into the cytosol, where it is ubiquitinated and degraded. The protein is Peroxisomal targeting signal 2 receptor of Komagataella phaffii (strain GS115 / ATCC 20864) (Yeast).